Consider the following 116-residue polypeptide: Ribosome-binding factor A (116 aa).

The protein belongs to the RbfA family. As to quaternary structure, monomer. Binds 30S ribosomal subunits, but not 50S ribosomal subunits or 70S ribosomes.

The protein resides in the cytoplasm. In terms of biological role, one of several proteins that assist in the late maturation steps of the functional core of the 30S ribosomal subunit. Associates with free 30S ribosomal subunits (but not with 30S subunits that are part of 70S ribosomes or polysomes). Required for efficient processing of 16S rRNA. May interact with the 5'-terminal helix region of 16S rRNA. In Mycoplasma pneumoniae (strain ATCC 29342 / M129 / Subtype 1) (Mycoplasmoides pneumoniae), this protein is Ribosome-binding factor A.